Here is a 441-residue protein sequence, read N- to C-terminus: Mannose-6-phosphate isomerase (441 aa).

Gln111, His113, Glu138, and His285 together coordinate Zn(2+). Residue Arg304 is part of the active site.

Belongs to the mannose-6-phosphate isomerase type 1 family. In terms of assembly, monomer. Requires Zn(2+) as cofactor.

It localises to the cytoplasm. The catalysed reaction is D-mannose 6-phosphate = D-fructose 6-phosphate. Its pathway is nucleotide-sugar biosynthesis; GDP-alpha-D-mannose biosynthesis; alpha-D-mannose 1-phosphate from D-fructose 6-phosphate: step 1/2. Involved in the synthesis of the GDP-mannose and dolichol-phosphate-mannose required for a number of critical mannosyl transfer reactions. This chain is Mannose-6-phosphate isomerase (PMI1), found in Candida albicans (strain SC5314 / ATCC MYA-2876) (Yeast).